Consider the following 975-residue polypeptide: Macrophage colony-stimulating factor 1 receptor 1 (975 aa).

Residues 1 to 17 (MQSFLPLLMGIMASASS) form the signal peptide. The Extracellular segment spans residues 18-519 (VEWRHPVIWF…VEVSDKLFTS (502 aa)). 5 Ig-like C2-type domains span residues 34–113 (SSEV…VYVK), 125–208 (SLRV…INVI), 221–310 (MDEY…LLVV), 329–407 (GLSV…FHVK), and 404–513 (FHVK…VEVS). Cystine bridges form between C49/C93, C140/C189, and C236/C292. 9 N-linked (GlcNAc...) asparagine glycosylation sites follow: N156, N165, N246, N250, N289, N301, N399, N420, and N451. Residues C426 and C495 are joined by a disulfide bond. A helical transmembrane segment spans residues 520 to 540 (TLIGAAGVLAIFLLLLVFLLY). Topologically, residues 541–975 (KYKQKPRFEI…LMKTNNYQFC (435 aa)) are cytoplasmic. Residues 544-576 (QKPRFEIRWKIIEAREGNNYTFIDPTQLPYNEK) are regulatory juxtamembrane domain. Phosphotyrosine; by autocatalysis is present on Y563. In terms of domain architecture, Protein kinase spans 584–918 (LKLGKVLGAG…MISQMINRLL (335 aa)). Residues 590-598 (LGAGAFGKV) and K619 each bind ATP. Y702 and Y726 each carry phosphotyrosine; by autocatalysis. Residue D782 is the Proton acceptor of the active site. The interval 800–822 (DFGLARDIMNDSNYVVKGNARLP) is activation loop. Y813 and Y929 each carry phosphotyrosine; by autocatalysis. The tract at residues 939 to 963 (EGEACDEPKRYDPPCERSCDHEEEE) is disordered. A compositionally biased stretch (basic and acidic residues) spans 944 to 958 (DEPKRYDPPCERSCD). Y972 is modified (phosphotyrosine; by autocatalysis).

It belongs to the protein kinase superfamily. Tyr protein kinase family. CSF-1/PDGF receptor subfamily. In terms of assembly, monomer. Homodimer. Interacts with CSF1. Autophosphorylated in response to CSF1 binding. autophosphorylation, leading to its degradation. Post-translationally, ubiquitinated. Becomes rapidly polyubiquitinated after autophosphorylation, leading to its degradation.

It localises to the cell membrane. It carries out the reaction L-tyrosyl-[protein] + ATP = O-phospho-L-tyrosyl-[protein] + ADP + H(+). Its activity is regulated as follows. Present in an inactive conformation in the absence of bound ligand. CSF1 binding leads to dimerization and activation by autophosphorylation on tyrosine residues. In terms of biological role, tyrosine-protein kinase that acts as a cell-surface receptor for CSF1 and plays an essential role in the regulation of survival, proliferation and differentiation of hematopoietic precursor cells, especially mononuclear phagocytes, such as macrophages and monocytes. Plays an important role in innate immunity and in inflammatory processes. Plays an important role in the regulation of osteoclast proliferation and differentiation, the regulation of bone resorption, and is required for normal bone development. Promotes reorganization of the actin cytoskeleton, regulates formation of membrane ruffles, cell adhesion and cell migration. Activates several signaling pathways in response to ligand binding. In Takifugu rubripes (Japanese pufferfish), this protein is Macrophage colony-stimulating factor 1 receptor 1 (csf1r1).